Consider the following 545-residue polypeptide: MARQALRSTLWLLPSILLCFPFCLPLSGQHVTELPGVLHCGLQSFQFAVNLSLEAESPVLTTWDSQGLPHRLKNDSDCGTWVMDSPDGFLVLEASYSGCYVTLEGSHYIMTVGVQEADVAGHVAGTRQRLLTCPLALQGKAPDTPNAKVCSPVPVKERLPCASSTISRGDCEELGCCYSSEEEGADSCYYGNTVTSHCTKEGHFSIAVSRDVTSPPLRLDSLRLGFRNITTGCDPVMKTSTFVLFQFPLTSCGTTQRITGDQAMYENELVAIRDVQAWGRSSITRDSNFRLRVSCTYSIHSIMSPVNMQVWTLPPPLPKTQPGPLSLELQIAQDKNYSSYYGTDAYPLVKFLQDPIYVEVSILHRTDPSLSLLLEQCWATPGSNPFHQPQWPILVKGCPYAGDNYQTKRIPVQKASDVFPSHHQRFSISTFSFMSAGREKQVLGGQVYLHCSASVCQPAGMPSCTVICPASRRRRKSELYFDNSTSISSKGPVILLQATKDPAVMLHKHSGTHADSPTLWVMGLSASMVITGVLVVSYLATRKQR.

An N-terminal signal peptide occupies residues 1 to 28 (MARQALRSTLWLLPSILLCFPFCLPLSG). The Extracellular portion of the chain corresponds to 29–518 (QHVTELPGVL…HSGTHADSPT (490 aa)). N50 and N74 each carry an N-linked (GlcNAc...) asparagine glycan. The P-type domain maps to 148–192 (KVCSPVPVKERLPCASSTISRGDCEELGCCYSSEEEGADSCYYGN). Residues 197 to 471 (HCTKEGHFSI…PSCTVICPAS (275 aa)) enclose the ZP domain. N-linked (GlcNAc...) asparagine glycosylation is present at N228. T312 carries an O-linked (GalNAc...) threonine glycan. N336 carries an N-linked (GlcNAc...) asparagine glycan. C377 and C451 are disulfide-bonded. A propeptide spans 472-545 (RRRRKSELYF…VSYLATRKQR (74 aa)) (removed in mature form). N483 carries an N-linked (GlcNAc...) asparagine glycan. Residues 519 to 539 (LWVMGLSASMVITGVLVVSYL) form a helical membrane-spanning segment. The Cytoplasmic portion of the chain corresponds to 540 to 545 (ATRKQR).

It belongs to the ZP domain family. ZPB subfamily. Post-translationally, proteolytically cleaved before the transmembrane segment to yield the secreted ectodomain incorporated in the zona pellucida. Expressed in oocytes.

The protein localises to the zona pellucida. It is found in the cell membrane. Component of the zona pellucida, an extracellular matrix surrounding oocytes which mediates sperm binding, induction of the acrosome reaction and prevents post-fertilization polyspermy. The zona pellucida is composed of 3 to 4 glycoproteins, ZP1, ZP2, ZP3, and ZP4. ZP4 may act as a sperm receptor. In Rattus norvegicus (Rat), this protein is Zona pellucida sperm-binding protein 4 (Zp4).